Here is a 270-residue protein sequence, read N- to C-terminus: MDRYGVFGNPIGHSKSPQIHALFAAQTGQALSYEPLLAPLDDFPAFARDFFREGRGANVTVPFKEQAYRMADELTERARRAGAVNTLKKLEDGRLLGDNTDGAGLVADLLNAGVTLSGRRILLLGAGGAVRGVLEPLLAHRPAALVIANRTASRAEQLVQEFAELGPLSASGFAELAEPVDLIVNGTSASLGGELPPLADSLIVAGRTFCYDMMYSAEPTPFCRWAAALGATTRDGLGMLVEQAAEAFELWRGVRPDTAPVLAELRRQLG.

Residues 14–16 and T60 contribute to the shikimate site; that span reads SKS. The active-site Proton acceptor is K64. Residue E76 participates in NADP(+) binding. Shikimate is bound by residues N85 and D101. NADP(+) is bound by residues 125 to 129, 149 to 154, and M213; these read GAGGA and NRTASR. Shikimate is bound at residue Y215. G236 contacts NADP(+).

Belongs to the shikimate dehydrogenase family. In terms of assembly, homodimer.

The catalysed reaction is shikimate + NADP(+) = 3-dehydroshikimate + NADPH + H(+). It functions in the pathway metabolic intermediate biosynthesis; chorismate biosynthesis; chorismate from D-erythrose 4-phosphate and phosphoenolpyruvate: step 4/7. Involved in the biosynthesis of the chorismate, which leads to the biosynthesis of aromatic amino acids. Catalyzes the reversible NADPH linked reduction of 3-dehydroshikimate (DHSA) to yield shikimate (SA). The protein is Shikimate dehydrogenase (NADP(+)) of Stutzerimonas stutzeri (strain A1501) (Pseudomonas stutzeri).